Reading from the N-terminus, the 626-residue chain is Chaperone protein HtpG (626 aa).

Positions 1 to 339 (MSQNQETRGF…SNDLPLNVSR (339 aa)) are a; substrate-binding. The interval 340–555 (EILQDNKITA…NDQMTTQMAK (216 aa)) is b. The interval 556–626 (LFAAAGQPVP…FIKRINKLLG (71 aa)) is c.

This sequence belongs to the heat shock protein 90 family. In terms of assembly, homodimer.

The protein localises to the cytoplasm. Functionally, molecular chaperone. Has ATPase activity. The protein is Chaperone protein HtpG of Haemophilus influenzae (strain PittGG).